Consider the following 456-residue polypeptide: UDP-N-acetylmuramoylalanine--D-glutamate ligase (456 aa).

121–127 (GTNGKTT) lines the ATP pocket.

The protein belongs to the MurCDEF family.

The protein localises to the cytoplasm. The catalysed reaction is UDP-N-acetyl-alpha-D-muramoyl-L-alanine + D-glutamate + ATP = UDP-N-acetyl-alpha-D-muramoyl-L-alanyl-D-glutamate + ADP + phosphate + H(+). It functions in the pathway cell wall biogenesis; peptidoglycan biosynthesis. Its function is as follows. Cell wall formation. Catalyzes the addition of glutamate to the nucleotide precursor UDP-N-acetylmuramoyl-L-alanine (UMA). The protein is UDP-N-acetylmuramoylalanine--D-glutamate ligase of Desulfotalea psychrophila (strain LSv54 / DSM 12343).